The chain runs to 455 residues: GTPase Der (455 aa).

EngA-type G domains lie at 4-169 (PVVA…PPKS) and 178-353 (IQLA…EQHR). Residues 10–17 (GRPNVGKS), 57–61 (DTGGL), 120–123 (NKCE), 184–191 (GRPNVGKS), 231–235 (DTAGI), and 296–299 (NKWD) each bind GTP. Residues 354–439 (RRVSTSVVNE…PLKLFWRGKQ (86 aa)) enclose the KH-like domain.

It belongs to the TRAFAC class TrmE-Era-EngA-EngB-Septin-like GTPase superfamily. EngA (Der) GTPase family. Associates with the 50S ribosomal subunit.

Its function is as follows. GTPase that plays an essential role in the late steps of ribosome biogenesis. The protein is GTPase Der of Synechococcus sp. (strain WH7803).